The chain runs to 352 residues: Deoxyhypusine synthase-like protein (352 aa).

This sequence belongs to the deoxyhypusine synthase family.

The chain is Deoxyhypusine synthase-like protein from Coxiella burnetii (strain Dugway 5J108-111).